The sequence spans 253 residues: Indole-3-glycerol phosphate synthase (253 aa).

The protein belongs to the TrpC family.

The enzyme catalyses 1-(2-carboxyphenylamino)-1-deoxy-D-ribulose 5-phosphate + H(+) = (1S,2R)-1-C-(indol-3-yl)glycerol 3-phosphate + CO2 + H2O. It participates in amino-acid biosynthesis; L-tryptophan biosynthesis; L-tryptophan from chorismate: step 4/5. This Bacillus cereus (strain AH187) protein is Indole-3-glycerol phosphate synthase.